The chain runs to 269 residues: UPF0162 protein BU173 (269 aa).

It belongs to the UPF0162 family.

The protein is UPF0162 protein BU173 of Buchnera aphidicola subsp. Acyrthosiphon pisum (strain APS) (Acyrthosiphon pisum symbiotic bacterium).